A 171-amino-acid polypeptide reads, in one-letter code: UPF0398 protein M28_Spy1394 (171 aa).

This sequence belongs to the UPF0398 family.

This is UPF0398 protein M28_Spy1394 from Streptococcus pyogenes serotype M28 (strain MGAS6180).